The chain runs to 261 residues: Small ribosomal subunit protein uS2 (261 aa).

This sequence belongs to the universal ribosomal protein uS2 family.

In Thermodesulfovibrio yellowstonii (strain ATCC 51303 / DSM 11347 / YP87), this protein is Small ribosomal subunit protein uS2.